The chain runs to 288 residues: Bifunctional protein FolD (288 aa).

Residues 164–166, Ser193, and Ile234 each bind NADP(+); that span reads GRS.

The protein belongs to the tetrahydrofolate dehydrogenase/cyclohydrolase family. Homodimer.

The enzyme catalyses (6R)-5,10-methylene-5,6,7,8-tetrahydrofolate + NADP(+) = (6R)-5,10-methenyltetrahydrofolate + NADPH. The catalysed reaction is (6R)-5,10-methenyltetrahydrofolate + H2O = (6R)-10-formyltetrahydrofolate + H(+). It functions in the pathway one-carbon metabolism; tetrahydrofolate interconversion. Catalyzes the oxidation of 5,10-methylenetetrahydrofolate to 5,10-methenyltetrahydrofolate and then the hydrolysis of 5,10-methenyltetrahydrofolate to 10-formyltetrahydrofolate. This chain is Bifunctional protein FolD, found in Nitratidesulfovibrio vulgaris (strain DSM 19637 / Miyazaki F) (Desulfovibrio vulgaris).